Here is a 1432-residue protein sequence, read N- to C-terminus: DNA-directed RNA polymerase subunit beta (1432 aa).

It belongs to the RNA polymerase beta chain family. The RNAP catalytic core consists of 2 alpha, 1 beta, 1 beta' and 1 omega subunit. When a sigma factor is associated with the core the holoenzyme is formed, which can initiate transcription.

It carries out the reaction RNA(n) + a ribonucleoside 5'-triphosphate = RNA(n+1) + diphosphate. Functionally, DNA-dependent RNA polymerase catalyzes the transcription of DNA into RNA using the four ribonucleoside triphosphates as substrates. The polypeptide is DNA-directed RNA polymerase subunit beta (Solibacter usitatus (strain Ellin6076)).